We begin with the raw amino-acid sequence, 695 residues long: uncharacterized protein (695 aa).

Disordered regions lie at residues 1–112 (MSRL…KHKK) and 242–262 (MKKV…NNDH). Low complexity predominate over residues 32–47 (DSSSSSDSPNFFPSSS). The span at 96–107 (KTEKEKEKEPIQ) shows a compositional bias: basic and acidic residues. The tr-type G domain maps to 278-492 (KPRTKLLLLG…KIDKEADTNH (215 aa)). Residues 287 to 294 (GPPKSGKK), 357 to 361 (IFTTN), and 417 to 420 (TKMD) each bind GTP.

Belongs to the TRAFAC class translation factor GTPase superfamily. Classic translation factor GTPase family.

It localises to the cytoplasm. The protein localises to the nucleus. This is an uncharacterized protein from Schizosaccharomyces pombe (strain 972 / ATCC 24843) (Fission yeast).